A 527-amino-acid chain; its full sequence is Transcriptional regulator ATRX (527 aa).

The segment at 1-527 (GRSVVEFGDM…RSYKQKKKRR (527 aa)) is disordered. Over residues 14–23 (RQQSAVSSAG) the composition is skewed to polar residues. Residues 27-46 (PSGKEENVHSPEDKRVTKSK) are compositionally biased toward basic and acidic residues. Basic residues predominate over residues 47–59 (EKSKHLRTRTGRK). The segment covering 60–84 (VKSDVTDRFRKKEQSSESSEGEKKQ) has biased composition (basic and acidic residues). Ser-62 and Ser-74 each carry phosphoserine. The span at 85-94 (GRQRTGTRGK) shows a compositional bias: basic residues. Composition is skewed to basic and acidic residues over residues 95–122 (KSTD…KLPE), 136–145 (NKNDTTDEAK), 152–194 (DKSC…EKKQ), and 204–250 (KRPE…KEVK). Lys-105 participates in a covalent cross-link: Glycyl lysine isopeptide (Lys-Gly) (interchain with G-Cter in SUMO2). A phosphoserine mark is found at Ser-112, Ser-113, and Ser-114. Ser-162 is modified (phosphoserine). Arg-184 carries the citrulline modification. Over residues 267–297 (KQKKQRMSAKKKNSNTKERKRKSLRATTTKR) the composition is skewed to basic residues. The tract at residues 290–427 (LRATTTKRKQ…SNQVNSESDS (138 aa)) is interaction with DAXX. Residues Ser-345, Ser-346, and Ser-354 each carry the phosphoserine modification. A compositionally biased stretch (basic and acidic residues) spans 368–382 (PENRIAKKMLLEEIK). A compositionally biased stretch (acidic residues) spans 387-398 (SDEDGSSDDEPK). The span at 399 to 410 (EGEKKRIGKQSE) shows a compositional bias: basic and acidic residues. Ser-423, Ser-425, and Ser-427 each carry phosphoserine. The span at 435 to 446 (PRYRHRLLRHKL) shows a compositional bias: basic residues. 2 positions are modified to phosphoserine: Ser-449 and Ser-453. Basic and acidic residues-rich tracts occupy residues 454-469 (GGEK…ETKG) and 509-518 (KKAELEENQR).

The protein belongs to the SNF2/RAD54 helicase family. As to quaternary structure, interacts with DAXX to form the chromatin remodeling complex ATRX:DAXX. Probably binds EZH2. Binds annexin V in a calcium and phosphatidylcholine/phosphatidylserine-dependent manner. Interacts directly with CBX5 via the PxVxL motif. Interacts with RAD50, MRE11 and NBN; indicative for an association with the MRN complex. Interacts with histone MACROH2A1. Interacts with histone H3 peptides methylated at 'Lys-10' with preferences H3K9me3 &gt; H3K9me2 &gt; H3K9me1. Interacts with histone H3 peptides unmethylated at 'Lys-5' (H3K4me0). Interacts with MECP2, SMC1 and SMC3. Interacts with SETDB1, TRIM28 and ZNF274. In terms of processing, citrullinated by PADI4.

It is found in the nucleus. The protein localises to the chromosome. It localises to the telomere. Its subcellular location is the PML body. The catalysed reaction is ATP + H2O = ADP + phosphate + H(+). Its function is as follows. Involved in transcriptional regulation and chromatin remodeling. Facilitates DNA replication in multiple cellular environments and is required for efficient replication of a subset of genomic loci. Binds to DNA tandem repeat sequences in both telomeres and euchromatin and in vitro binds DNA quadruplex structures. May help stabilizing G-rich regions into regular chromatin structures by remodeling G4 DNA and incorporating H3.3-containing nucleosomes. Catalytic component of the chromatin remodeling complex ATRX:DAXX which has ATP-dependent DNA translocase activity and catalyzes the replication-independent deposition of histone H3.3 in pericentric DNA repeats outside S-phase and telomeres, and the in vitro remodeling of H3.3-containing nucleosomes. Its heterochromatin targeting is proposed to involve a combinatorial readout of histone H3 modifications (specifically methylation states of H3K9 and H3K4) and association with CBX5. Involved in maintaining telomere structural integrity in embryonic stem cells probably implying recruitment of CBX5 to telomeres. May be involved in transcriptional regulation of telomeric repeat-containing RNA (TERRA). Acts as a negative regulator of chromatin incorporation of transcriptionally repressive histone MACROH2A1, particularily at telomeres. Participates in the allele-specific gene expression at the imprinted IGF2/H19 gene locus. On the maternal allele, required for the chromatin occupancy of SMC1 and CTCTF within the H19 imprinting control region (ICR) and involved in esatblishment of histone tails modifications in the ICR. Binds to zinc-finger coding genes with atypical chromatin signatures and regulates its H3K9me3 levels. Forms a complex with ZNF274, TRIM28 and SETDB1 to facilitate the deposition and maintenance of H3K9me3 at the 3' exons of zinc-finger genes. The protein is Transcriptional regulator ATRX (Atrx) of Rattus norvegicus (Rat).